A 713-amino-acid chain; its full sequence is Ribosomal RNA large subunit methyltransferase K/L (713 aa).

One can recognise a THUMP domain in the interval L43 to F154.

The protein belongs to the methyltransferase superfamily. RlmKL family.

Its subcellular location is the cytoplasm. The enzyme catalyses guanosine(2445) in 23S rRNA + S-adenosyl-L-methionine = N(2)-methylguanosine(2445) in 23S rRNA + S-adenosyl-L-homocysteine + H(+). The catalysed reaction is guanosine(2069) in 23S rRNA + S-adenosyl-L-methionine = N(2)-methylguanosine(2069) in 23S rRNA + S-adenosyl-L-homocysteine + H(+). Functionally, specifically methylates the guanine in position 2445 (m2G2445) and the guanine in position 2069 (m7G2069) of 23S rRNA. This Shewanella sp. (strain ANA-3) protein is Ribosomal RNA large subunit methyltransferase K/L.